A 252-amino-acid polypeptide reads, in one-letter code: Small ribosomal subunit protein eS4 (252 aa).

Residues 43 to 105 (FPLLIIVRDI…TGETYRVIPV (63 aa)) enclose the S4 RNA-binding domain.

It belongs to the eukaryotic ribosomal protein eS4 family.

This chain is Small ribosomal subunit protein eS4, found in Staphylothermus marinus (strain ATCC 43588 / DSM 3639 / JCM 9404 / F1).